Reading from the N-terminus, the 508-residue chain is Anaerobic nitric oxide reductase transcription regulator NorR (508 aa).

4-aspartylphosphate is present on Asp56. Positions 186–415 constitute a Sigma-54 factor interaction domain; it reads MIGQSPAMAR…LEHAIHRAAV (230 aa). ATP is bound by residues 214 to 221 and 277 to 286; these read GETGVGKE and ADQGTLFLDE. Positions 483-502 form a DNA-binding region, H-T-H motif; that stretch reads WAATARALELDSGNLHRLAK.

The protein operates within nitrogen metabolism; nitric oxide reduction. Its function is as follows. Required for the expression of anaerobic nitric oxide (NO) reductase, acts as a transcriptional activator for at least the norVW operon. Activation also requires sigma-54. This chain is Anaerobic nitric oxide reductase transcription regulator NorR, found in Aeromonas hydrophila subsp. hydrophila (strain ATCC 7966 / DSM 30187 / BCRC 13018 / CCUG 14551 / JCM 1027 / KCTC 2358 / NCIMB 9240 / NCTC 8049).